The primary structure comprises 232 residues: Phosphatidylserine decarboxylase proenzyme (232 aa).

Ser190 serves as the catalytic Schiff-base intermediate with substrate; via pyruvic acid. A Pyruvic acid (Ser); by autocatalysis modification is found at Ser190.

It belongs to the phosphatidylserine decarboxylase family. PSD-A subfamily. As to quaternary structure, heterodimer of a large membrane-associated beta subunit and a small pyruvoyl-containing alpha subunit. Pyruvate is required as a cofactor. In terms of processing, is synthesized initially as an inactive proenzyme. Formation of the active enzyme involves a self-maturation process in which the active site pyruvoyl group is generated from an internal serine residue via an autocatalytic post-translational modification. Two non-identical subunits are generated from the proenzyme in this reaction, and the pyruvate is formed at the N-terminus of the alpha chain, which is derived from the carboxyl end of the proenzyme. The post-translation cleavage follows an unusual pathway, termed non-hydrolytic serinolysis, in which the side chain hydroxyl group of the serine supplies its oxygen atom to form the C-terminus of the beta chain, while the remainder of the serine residue undergoes an oxidative deamination to produce ammonia and the pyruvoyl prosthetic group on the alpha chain.

It is found in the cell membrane. The catalysed reaction is a 1,2-diacyl-sn-glycero-3-phospho-L-serine + H(+) = a 1,2-diacyl-sn-glycero-3-phosphoethanolamine + CO2. Its pathway is phospholipid metabolism; phosphatidylethanolamine biosynthesis; phosphatidylethanolamine from CDP-diacylglycerol: step 2/2. In terms of biological role, catalyzes the formation of phosphatidylethanolamine (PtdEtn) from phosphatidylserine (PtdSer). The sequence is that of Phosphatidylserine decarboxylase proenzyme from Bradyrhizobium sp. (strain ORS 278).